Here is a 482-residue protein sequence, read N- to C-terminus: MSAFVRVVPRISRSSVLTRSLRLQLRCYASYPEHTIIGMPALSPTMTQGNLAAWTKKEGDQLSPGEVIAEIETDKAQMDFEFQEDGYLAKILVPEGTKDIPVNKPIAVYVEDKADVPAFKDFKLEDSGSDSKTSTKAQPAEPQAEKKQEAPAEETKTSAPEAKKSDVAAPQGRIFASPLAKTIALEKGISLKDVHGTGPRGRITKADIESYLEKSSKQSSQTSGAAAATPAAATSSTTAGSAPSPSSTASYEDVPISTMRSIIGERLLQSTQGIPSYIVSSKISISKLLKLRQSLNATANDKYKLSINDLLVKAITVAAKRVPDANAYWLPNENVIRKFKNVDVSVAVATPTGLLTPIVKNCEAKGLSQISNEIKELVKRARINKLAPEEFQGGTICISNMGMNNAVNMFTSIINPPQSTILAIATVERVAVEDAAAENGFSFDNQVTITGTFDHRTIDGAKGAEFMKELKTVIENPLEMLL.

The N-terminal 28 residues, 1–28 (MSAFVRVVPRISRSSVLTRSLRLQLRCY), are a transit peptide targeting the mitochondrion. A Lipoyl-binding domain is found at 34-110 (HTIIGMPALS…PVNKPIAVYV (77 aa)). Lys75 is modified (N6-lipoyllysine). The tract at residues 122-170 (FKLEDSGSDSKTSTKAQPAEPQAEKKQEAPAEETKTSAPEAKKSDVAAP) is disordered. A compositionally biased stretch (basic and acidic residues) spans 143–166 (QAEKKQEAPAEETKTSAPEAKKSD). Residues 175 to 212 (FASPLAKTIALEKGISLKDVHGTGPRGRITKADIESYL) form the Peripheral subunit-binding (PSBD) domain. A disordered region spans residues 214–251 (KSSKQSSQTSGAAAATPAAATSSTTAGSAPSPSSTASY). Positions 217–250 (KQSSQTSGAAAATPAAATSSTTAGSAPSPSSTAS) are enriched in low complexity. Active-site residues include His455 and Asp459.

It belongs to the 2-oxoacid dehydrogenase family. As to quaternary structure, eukaryotic pyruvate dehydrogenase (PDH) complexes are organized as a core consisting of the oligomeric dihydrolipoamide acetyl-transferase (E2), around which are arranged multiple copies of pyruvate dehydrogenase (E1), dihydrolipoamide dehydrogenase (E3) and protein X (E3BP) bound by non-covalent bonds. (R)-lipoate is required as a cofactor.

The protein localises to the mitochondrion matrix. The enzyme catalyses N(6)-[(R)-dihydrolipoyl]-L-lysyl-[protein] + acetyl-CoA = N(6)-[(R)-S(8)-acetyldihydrolipoyl]-L-lysyl-[protein] + CoA. The pyruvate dehydrogenase complex catalyzes the overall conversion of pyruvate to acetyl-CoA and CO(2). This is Dihydrolipoyllysine-residue acetyltransferase component of pyruvate dehydrogenase complex, mitochondrial (LAT1) from Saccharomyces cerevisiae (strain ATCC 204508 / S288c) (Baker's yeast).